A 251-amino-acid polypeptide reads, in one-letter code: Hydroxyacylglutathione hydrolase (251 aa).

Positions 54, 56, 58, 59, 113, 140, and 178 each coordinate Zn(2+).

Belongs to the metallo-beta-lactamase superfamily. Glyoxalase II family. In terms of assembly, monomer. Requires Zn(2+) as cofactor.

The catalysed reaction is an S-(2-hydroxyacyl)glutathione + H2O = a 2-hydroxy carboxylate + glutathione + H(+). It participates in secondary metabolite metabolism; methylglyoxal degradation; (R)-lactate from methylglyoxal: step 2/2. Its function is as follows. Thiolesterase that catalyzes the hydrolysis of S-D-lactoyl-glutathione to form glutathione and D-lactic acid. This is Hydroxyacylglutathione hydrolase from Synechococcus sp. (strain CC9902).